The sequence spans 58 residues: Small ribosomal subunit protein bS21B (58 aa).

This sequence belongs to the bacterial ribosomal protein bS21 family.

This chain is Small ribosomal subunit protein bS21B, found in Trichormus variabilis (strain ATCC 29413 / PCC 7937) (Anabaena variabilis).